The primary structure comprises 178 residues: ATP-dependent protease subunit HslV (178 aa).

Residue Thr7 is part of the active site. Na(+) is bound by residues Gly162, Cys165, and Thr168.

It belongs to the peptidase T1B family. HslV subfamily. A double ring-shaped homohexamer of HslV is capped on each side by a ring-shaped HslU homohexamer. The assembly of the HslU/HslV complex is dependent on binding of ATP.

Its subcellular location is the cytoplasm. It carries out the reaction ATP-dependent cleavage of peptide bonds with broad specificity.. Allosterically activated by HslU binding. Its function is as follows. Protease subunit of a proteasome-like degradation complex believed to be a general protein degrading machinery. The polypeptide is ATP-dependent protease subunit HslV (Burkholderia orbicola (strain AU 1054)).